Here is a 353-residue protein sequence, read N- to C-terminus: Methionine import ATP-binding protein MetN (353 aa).

The ABC transporter domain occupies 8-249 (LDQIDVTFHQ…PKQPLTQDFI (242 aa)). ATP is bound at residue 42-49 (GYSGAGKS).

It belongs to the ABC transporter superfamily. Methionine importer (TC 3.A.1.24) family. In terms of assembly, the complex is composed of two ATP-binding proteins (MetN), two transmembrane proteins (MetI) and a solute-binding protein (MetQ).

Its subcellular location is the cell membrane. It catalyses the reaction L-methionine(out) + ATP + H2O = L-methionine(in) + ADP + phosphate + H(+). The catalysed reaction is D-methionine(out) + ATP + H2O = D-methionine(in) + ADP + phosphate + H(+). Part of the ABC transporter complex MetNIQ involved in methionine import. Responsible for energy coupling to the transport system. The chain is Methionine import ATP-binding protein MetN from Streptococcus pneumoniae serotype 4 (strain ATCC BAA-334 / TIGR4).